The primary structure comprises 608 residues: Albumin (608 aa).

Residues 1-18 (MKWVTFLLLLFVSGSAFS) form the signal peptide. Residues 19–24 (RGVFRR) constitute a propeptide that is removed on maturation. Albumin domains follow at residues 19–211 (RGVF…GVKE), 212–403 (KALV…EFQP), and 404–601 (LVEE…NLVT). His27 contacts Cu cation. Ser29 carries the phosphoserine modification. Glu30 and Asp37 together coordinate Ca(2+). A disulfide bridge connects residues Cys77 and Cys86. Residues Ser82 and Ser89 each carry the phosphoserine modification. Position 91 (His91) interacts with Zn(2+). 6 disulfide bridges follow: Cys99/Cys115, Cys114/Cys125, Cys148/Cys193, Cys192/Cys201, Cys224/Cys270, and Cys269/Cys277. Lys229 carries the post-translational modification N6-succinyllysine. Glu268 lines the Ca(2+) pocket. His271 and Asp273 together coordinate Zn(2+). Positions 273, 276, and 279 each coordinate Ca(2+). 8 cysteine pairs are disulfide-bonded: Cys289–Cys303, Cys302–Cys313, Cys340–Cys385, Cys384–Cys393, Cys416–Cys462, Cys461–Cys472, Cys485–Cys501, and Cys500–Cys511. At Ser297 the chain carries Phosphoserine. A Phosphoserine modification is found at Ser443. Residues Thr444 and Thr446 each carry the phosphothreonine modification. Lys460 bears the N6-succinyllysine mark. Phosphoserine is present on Ser513. 2 disulfide bridges follow: Cys538–Cys583 and Cys582–Cys591. Position 543 is an N6-succinyllysine (Lys543). Residue Lys558 is modified to N6-methyllysine. Thr570 carries the phosphothreonine modification. Lys588 carries the post-translational modification N6-succinyllysine.

It belongs to the ALB/AFP/VDB family. As to quaternary structure, part of a complex composed of complement component C3, CLCA1/CLCA3, A2ML1/OH and ALB/serum albumin. Interacts with FCGRT; this interaction regulates ALB homeostasis. Interacts with TASOR. In plasma, occurs in a covalently-linked complex with chromophore-bound alpha-1-microglobulin; this interaction does not prevent fatty acid binding to ALB. Post-translationally, phosphorylated by FAM20C in the extracellular medium. As to expression, plasma. Expressed in the granular cells within the cerebellum.

The protein localises to the secreted. Its function is as follows. Binds water, Ca(2+), Na(+), K(+), fatty acids, hormones, bilirubin and drugs. Its main function is the regulation of the colloidal osmotic pressure of blood. Major zinc transporter in plasma, typically binds about 80% of all plasma zinc. Major calcium and magnesium transporter in plasma, binds approximately 45% of circulating calcium and magnesium in plasma. Potentially has more than two calcium-binding sites and might additionally bind calcium in a non-specific manner. The shared binding site between zinc and calcium at residue Asp-273 suggests a crosstalk between zinc and calcium transport in the blood. The rank order of affinity is zinc &gt; calcium &gt; magnesium. Binds to the bacterial siderophore enterobactin and inhibits enterobactin-mediated iron uptake of E.coli from ferric transferrin, and may thereby limit the utilization of iron and growth of enteric bacteria such as E.coli. Does not prevent iron uptake by the bacterial siderophore aerobactin. The polypeptide is Albumin (Alb) (Mus musculus (Mouse)).